Here is a 213-residue protein sequence, read N- to C-terminus: Phosphatidylserine decarboxylase proenzyme (213 aa).

Residue Ser-180 is the Schiff-base intermediate with substrate; via pyruvic acid of the active site. Ser-180 is modified (pyruvic acid (Ser); by autocatalysis).

This sequence belongs to the phosphatidylserine decarboxylase family. PSD-A subfamily. Heterodimer of a large membrane-associated beta subunit and a small pyruvoyl-containing alpha subunit. It depends on pyruvate as a cofactor. Is synthesized initially as an inactive proenzyme. Formation of the active enzyme involves a self-maturation process in which the active site pyruvoyl group is generated from an internal serine residue via an autocatalytic post-translational modification. Two non-identical subunits are generated from the proenzyme in this reaction, and the pyruvate is formed at the N-terminus of the alpha chain, which is derived from the carboxyl end of the proenzyme. The post-translation cleavage follows an unusual pathway, termed non-hydrolytic serinolysis, in which the side chain hydroxyl group of the serine supplies its oxygen atom to form the C-terminus of the beta chain, while the remainder of the serine residue undergoes an oxidative deamination to produce ammonia and the pyruvoyl prosthetic group on the alpha chain.

The protein localises to the cell membrane. It catalyses the reaction a 1,2-diacyl-sn-glycero-3-phospho-L-serine + H(+) = a 1,2-diacyl-sn-glycero-3-phosphoethanolamine + CO2. It participates in phospholipid metabolism; phosphatidylethanolamine biosynthesis; phosphatidylethanolamine from CDP-diacylglycerol: step 2/2. In terms of biological role, catalyzes the formation of phosphatidylethanolamine (PtdEtn) from phosphatidylserine (PtdSer). In Carboxydothermus hydrogenoformans (strain ATCC BAA-161 / DSM 6008 / Z-2901), this protein is Phosphatidylserine decarboxylase proenzyme.